We begin with the raw amino-acid sequence, 917 residues long: Phosphoenolpyruvate carboxylase (917 aa).

Residues H145 and K578 contribute to the active site.

This sequence belongs to the PEPCase type 1 family. Mg(2+) serves as cofactor.

It catalyses the reaction oxaloacetate + phosphate = phosphoenolpyruvate + hydrogencarbonate. Its function is as follows. Forms oxaloacetate, a four-carbon dicarboxylic acid source for the tricarboxylic acid cycle. This is Phosphoenolpyruvate carboxylase from Azoarcus sp. (strain BH72).